The sequence spans 88 residues: Phosphocarrier protein HPr (88 aa).

The HPr domain occupies 1-88 (MASKEFHIVA…ETMTKEGLAE (88 aa)). H15 functions as the Pros-phosphohistidine intermediate in the catalytic mechanism. The residue at position 46 (S46) is a Phosphoserine; by HPrK/P.

It belongs to the HPr family.

The protein localises to the cytoplasm. Phosphorylation on Ser-46 inhibits the phosphoryl transfer from enzyme I to HPr. General (non sugar-specific) component of the phosphoenolpyruvate-dependent sugar phosphotransferase system (sugar PTS). This major carbohydrate active-transport system catalyzes the phosphorylation of incoming sugar substrates concomitantly with their translocation across the cell membrane. The phosphoryl group from phosphoenolpyruvate (PEP) is transferred to the phosphoryl carrier protein HPr by enzyme I. Phospho-HPr then transfers it to the PTS EIIA domain. Its function is as follows. P-Ser-HPr interacts with the catabolite control protein A (CcpA), forming a complex that binds to DNA at the catabolite response elements cre, operator sites preceding a large number of catabolite-regulated genes. Thus, P-Ser-HPr is a corepressor in carbon catabolite repression (CCR), a mechanism that allows bacteria to coordinate and optimize the utilization of available carbon sources. P-Ser-HPr also plays a role in inducer exclusion, in which it probably interacts with several non-PTS permeases and inhibits their transport activity. This is Phosphocarrier protein HPr (ptsH) from Lactococcus lactis subsp. cremoris (Streptococcus cremoris).